The sequence spans 615 residues: Elongation factor 4 (615 aa).

A tr-type G domain is found at 14 to 196 (AMIRNFCIIA…EIVRQVPAPV (183 aa)). GTP-binding positions include 26–31 (DHGKST) and 143–146 (NKID).

The protein belongs to the TRAFAC class translation factor GTPase superfamily. Classic translation factor GTPase family. LepA subfamily.

It localises to the cell membrane. It catalyses the reaction GTP + H2O = GDP + phosphate + H(+). Required for accurate and efficient protein synthesis under certain stress conditions. May act as a fidelity factor of the translation reaction, by catalyzing a one-codon backward translocation of tRNAs on improperly translocated ribosomes. Back-translocation proceeds from a post-translocation (POST) complex to a pre-translocation (PRE) complex, thus giving elongation factor G a second chance to translocate the tRNAs correctly. Binds to ribosomes in a GTP-dependent manner. The sequence is that of Elongation factor 4 from Frankia alni (strain DSM 45986 / CECT 9034 / ACN14a).